The chain runs to 89 residues: Myrmicitoxin(1)-Pm2a (89 aa).

Residues 1 to 22 (MEIPKLLYIAVIAIGLSGSLTC) form the signal peptide. Residues 23-61 (ATPLANPWGDPEAEANPEAKATAEATAEAIAEALAEPEP) constitute a propeptide that is removed on maturation. Asn88 carries the post-translational modification Asparagine amide.

It belongs to the formicidae venom clade 1 family. In terms of tissue distribution, expressed by the venom gland.

The protein resides in the secreted. Toxin that potently modulates mammalian voltage-gated sodium (Nav) channels, reducing the voltage threshold for activation and inhibiting channel inactivation. Shows activity on hNav1.6/SCN8A (EC(50)=176 nM), mNav1.7/SCN9A (EC(50)=102 nM) and hNav1.7 (EC(50)=154 nM). In vivo, causes spontaneous, gradual and long-lasting nocifensive behaviors by intraplantar injection in mice, as well as pronounced swelling of the injected paw. Does not have effect on insects (blowflies). This is Myrmicitoxin(1)-Pm2a from Pogonomyrmex maricopa (Maricopa harvester ant).